The primary structure comprises 314 residues: Mitochondrial thiamine pyrophosphate carrier 1 (314 aa).

6 helical membrane passes run 14-30 (VAAW…GLLA), 84-100 (LLYV…YSLF), 116-136 (LVVG…FDVL), 170-186 (GSIA…SIMF), 217-233 (SAGT…TFPL), and 285-302 (GILV…VSFW). Solcar repeat units lie at residues 14–103 (VAAW…FNRY), 110–195 (EARL…IRIY), and 210–310 (ELAT…AIHY).

Belongs to the mitochondrial carrier (TC 2.A.29) family.

Its subcellular location is the mitochondrion inner membrane. Functionally, mitochondrial transporter that mediates uptake of thiamine pyrophosphate (ThPP) into mitochondria. In Saccharomyces cerevisiae (strain ATCC 204508 / S288c) (Baker's yeast), this protein is Mitochondrial thiamine pyrophosphate carrier 1 (TPC1).